A 417-amino-acid chain; its full sequence is Alpha-galactosidase (417 aa).

The first 55 residues, 1-55, serve as a signal peptide directing secretion; it reads MARASSSSSPPSPRLLLLLLVAVAATLLPEAAALGNFTAESRGARWRSRRARRRA. W71, D106, D107, C156, K183, D185, W219, R236, and D240 together coordinate alpha-D-galactose. Cystine bridges form between C76-C108 and C156-C187. Residue D185 is the Nucleophile of the active site. The active-site Proton donor is the D240.

It belongs to the glycosyl hydrolase 27 family.

The enzyme catalyses Hydrolysis of terminal, non-reducing alpha-D-galactose residues in alpha-D-galactosides, including galactose oligosaccharides, galactomannans and galactolipids.. It carries out the reaction melibiose + H2O = D-galactose + D-glucose. The catalysed reaction is raffinose + H2O = sucrose + D-galactose. It catalyses the reaction stachyose + H2O = raffinose + D-galactose. The enzyme catalyses alpha-D-Gal-(1-&gt;6)-beta-D-Man-(1-&gt;4)-beta-D-Man-(1-&gt;4)-D-Man + H2O = beta-D-Man-(1-&gt;4)-beta-D-Man-(1-&gt;4)-D-Man + D-galactose. It carries out the reaction beta-D-Man-(1-&gt;4)-[alpha-D-Gal-(1-&gt;6)]-beta-D-Man-(1-&gt;4)-beta-D-Man-(1-&gt;4)-D-Man + H2O = beta-D-Man-(1-&gt;4)-beta-D-Man-(1-&gt;4)-beta-D-Man-(1-&gt;4)-D-Man + D-galactose. Its activity is regulated as follows. 1 mM Hg(2+) and Ag(2+) decrease activity by 98% and 96%, respectively. 1 mM Para-chloromercuribenzoic acid (PCMB) completely inhibits enzymatic activity. Hydrolyzes melibiose, raffinose and stachyose in the following decreasing order of reactivity: raffinose, melibiose, stachyose. Acts on both the terminal alpha-galactosyl residue and the side-chain alpha-galactosyl residue of the galactomanno-oligosaccharides. The chain is Alpha-galactosidase from Oryza sativa subsp. japonica (Rice).